Here is a 286-residue protein sequence, read N- to C-terminus: Phosphatidylserine decarboxylase proenzyme (286 aa).

Active-site charge relay system; for autoendoproteolytic cleavage activity residues include Asp-90, His-147, and Ser-250. The Schiff-base intermediate with substrate; via pyruvic acid; for decarboxylase activity role is filled by Ser-250. Ser-250 is subject to Pyruvic acid (Ser); by autocatalysis.

It belongs to the phosphatidylserine decarboxylase family. PSD-B subfamily. Prokaryotic type I sub-subfamily. Heterodimer of a large membrane-associated beta subunit and a small pyruvoyl-containing alpha subunit. The cofactor is pyruvate. In terms of processing, is synthesized initially as an inactive proenzyme. Formation of the active enzyme involves a self-maturation process in which the active site pyruvoyl group is generated from an internal serine residue via an autocatalytic post-translational modification. Two non-identical subunits are generated from the proenzyme in this reaction, and the pyruvate is formed at the N-terminus of the alpha chain, which is derived from the carboxyl end of the proenzyme. The autoendoproteolytic cleavage occurs by a canonical serine protease mechanism, in which the side chain hydroxyl group of the serine supplies its oxygen atom to form the C-terminus of the beta chain, while the remainder of the serine residue undergoes an oxidative deamination to produce ammonia and the pyruvoyl prosthetic group on the alpha chain. During this reaction, the Ser that is part of the protease active site of the proenzyme becomes the pyruvoyl prosthetic group, which constitutes an essential element of the active site of the mature decarboxylase.

It localises to the cell membrane. The catalysed reaction is a 1,2-diacyl-sn-glycero-3-phospho-L-serine + H(+) = a 1,2-diacyl-sn-glycero-3-phosphoethanolamine + CO2. It functions in the pathway phospholipid metabolism; phosphatidylethanolamine biosynthesis; phosphatidylethanolamine from CDP-diacylglycerol: step 2/2. Functionally, catalyzes the formation of phosphatidylethanolamine (PtdEtn) from phosphatidylserine (PtdSer). The polypeptide is Phosphatidylserine decarboxylase proenzyme (Saccharophagus degradans (strain 2-40 / ATCC 43961 / DSM 17024)).